The following is a 543-amino-acid chain: CTP synthase (543 aa).

The tract at residues 1 to 265 (MTRFVFITGG…DTEVLRHFGL (265 aa)) is amidoligase domain. S13 serves as a coordination point for CTP. S13 contributes to the UTP binding site. 14–19 (SLGKGI) contacts ATP. Y54 is an L-glutamine binding site. D71 lines the ATP pocket. 2 residues coordinate Mg(2+): D71 and E139. CTP is bound by residues 146-148 (DIE), 186-191 (KTKPTQ), and K222. UTP is bound by residues 186-191 (KTKPTQ) and K222. The region spanning 291 to 542 (RIAVVGKYTA…VGAAVKKMRL (252 aa)) is the Glutamine amidotransferase type-1 domain. G354 serves as a coordination point for L-glutamine. Residue C381 is the Nucleophile; for glutamine hydrolysis of the active site. L-glutamine is bound by residues 382 to 385 (FGMQ), E405, and R470. Active-site residues include H515 and E517.

It belongs to the CTP synthase family. Homotetramer.

The enzyme catalyses UTP + L-glutamine + ATP + H2O = CTP + L-glutamate + ADP + phosphate + 2 H(+). It catalyses the reaction L-glutamine + H2O = L-glutamate + NH4(+). The catalysed reaction is UTP + NH4(+) + ATP = CTP + ADP + phosphate + 2 H(+). The protein operates within pyrimidine metabolism; CTP biosynthesis via de novo pathway; CTP from UDP: step 2/2. Its activity is regulated as follows. Allosterically activated by GTP, when glutamine is the substrate; GTP has no effect on the reaction when ammonia is the substrate. The allosteric effector GTP functions by stabilizing the protein conformation that binds the tetrahedral intermediate(s) formed during glutamine hydrolysis. Inhibited by the product CTP, via allosteric rather than competitive inhibition. Catalyzes the ATP-dependent amination of UTP to CTP with either L-glutamine or ammonia as the source of nitrogen. Regulates intracellular CTP levels through interactions with the four ribonucleotide triphosphates. This is CTP synthase from Gluconacetobacter diazotrophicus (strain ATCC 49037 / DSM 5601 / CCUG 37298 / CIP 103539 / LMG 7603 / PAl5).